Consider the following 655-residue polypeptide: Hepatocyte growth factor activator serine protease (655 aa).

The first 35 residues, 1–35 (MGRWAWVPSPWPPPGLGPFLLLLLLLLLLPRGFQP), serve as a signal peptide directing secretion. Positions 36–372 (QPGGNRTESP…RLEACESLTR (337 aa)) are cleaved as a propeptide — removed in mature form. 2 N-linked (GlcNAc...) asparagine glycosylation sites follow: N40 and N48. The tract at residues 64–102 (TSETPATSAPEAEGPQSGGLPPPPRAVPSSSSPQAQALT) is disordered. Residues 103–150 (EDGRPCRFPFRYGGRMLHACTSEGSAHRKWCATTHNYDRDRAWGYCVE) enclose the Fibronectin type-II domain. Cystine bridges form between C108-C133, C122-C148, C164-C175, C169-C186, C188-C197, C202-C230, C228-C237, C245-C256, C250-C267, C269-C278, C286-C367, C307-C349, C338-C362, C394-C521, C432-C448, C440-C510, C535-C604, C567-C583, and C594-C622. The 39-residue stretch at 160–198 (ALDPCASGPCLNGGSCSNTQDPQSYHCSCPRAFTGKDCG) folds into the EGF-like 1 domain. Positions 200 to 240 (EKCFDETRYEYLEGGDRWARVRQGHVEQCECFGGRTWCEGT) constitute a Fibronectin type-I domain. Positions 241–279 (RHTACLSSPCLNGGTCHLIVATGTTVCACPPGFAGRLCN) constitute an EGF-like 2 domain. The 82-residue stretch at 286–367 (CFLGNGTGYR…SWEYCRLEAC (82 aa)) folds into the Kringle domain. N-linked (GlcNAc...) asparagine glycosylation occurs at N290. The Peptidase S1 domain maps to 408–646 (IIGGSSSLPG…YVDWINDRIR (239 aa)). The active-site Charge relay system is the H447. Residues N468 and N492 are each glycosylated (N-linked (GlcNAc...) asparagine). The active-site Charge relay system is D497. N-linked (GlcNAc...) asparagine glycosylation occurs at N546. Residue S598 is the Charge relay system of the active site.

Belongs to the peptidase S1 family. In terms of assembly, heterodimer of a short chain and a long chain linked by a disulfide bond. In terms of processing, the active form of HGFAC presents in the serum is derived from the COOH-terminal region of the precursor by the cleavage of bonds between Arg-372 and Val-373 and Arg-407 and Ile-408. As to expression, liver.

Its subcellular location is the secreted. In terms of biological role, serine protease that hydrolyzes the inactive zymogen hepatocyte growth factor (HGFsc) to an activated disulfide-linked heterodimer, then initiating hepatocyte growth factor receptor signaling pathway. The sequence is that of Hepatocyte growth factor activator serine protease from Homo sapiens (Human).